A 163-amino-acid polypeptide reads, in one-letter code: UPF0303 protein SAV_5210 (163 aa).

Belongs to the UPF0303 family.

The polypeptide is UPF0303 protein SAV_5210 (Streptomyces avermitilis (strain ATCC 31267 / DSM 46492 / JCM 5070 / NBRC 14893 / NCIMB 12804 / NRRL 8165 / MA-4680)).